The chain runs to 537 residues: Eukaryotic translation initiation factor 3 subunit L (537 aa).

Positions 1–19 (MSRRVEFDLSTEDHSDRRR) are enriched in basic and acidic residues. Residues 1-30 (MSRRVEFDLSTEDHSDRRRTNTFSSSADED) are disordered. The 189-residue stretch at 299–487 (EATKMFVNCL…GPSSADDDEP (189 aa)) folds into the PCI domain.

Belongs to the eIF-3 subunit L family. In terms of assembly, component of the eukaryotic translation initiation factor 3 (eIF-3) complex.

The protein resides in the cytoplasm. In terms of biological role, component of the eukaryotic translation initiation factor 3 (eIF-3) complex, which is involved in protein synthesis of a specialized repertoire of mRNAs and, together with other initiation factors, stimulates binding of mRNA and methionyl-tRNAi to the 40S ribosome. The eIF-3 complex specifically targets and initiates translation of a subset of mRNAs involved in cell proliferation. The polypeptide is Eukaryotic translation initiation factor 3 subunit L (Caenorhabditis elegans).